The primary structure comprises 283 residues: Phosphatidylglycerol--prolipoprotein diacylglyceryl transferase (283 aa).

4 helical membrane passes run 17–37 (LAVR…TFLG), 56–76 (FLTW…VLFY), 92–112 (WEGG…IWLF), and 117–137 (GIGF…GLAS). R139 contacts a 1,2-diacyl-sn-glycero-3-phospho-(1'-sn-glycerol). A run of 3 helical transmembrane segments spans residues 194–214 (PSQL…VWLF), 222–242 (GQVA…AEFA), and 255–275 (GLSM…VGFV).

This sequence belongs to the Lgt family.

It localises to the cell inner membrane. The catalysed reaction is L-cysteinyl-[prolipoprotein] + a 1,2-diacyl-sn-glycero-3-phospho-(1'-sn-glycerol) = an S-1,2-diacyl-sn-glyceryl-L-cysteinyl-[prolipoprotein] + sn-glycerol 1-phosphate + H(+). The protein operates within protein modification; lipoprotein biosynthesis (diacylglyceryl transfer). In terms of biological role, catalyzes the transfer of the diacylglyceryl group from phosphatidylglycerol to the sulfhydryl group of the N-terminal cysteine of a prolipoprotein, the first step in the formation of mature lipoproteins. In Neisseria meningitidis serogroup A / serotype 4A (strain DSM 15465 / Z2491), this protein is Phosphatidylglycerol--prolipoprotein diacylglyceryl transferase.